The chain runs to 74 residues: Dermaseptin-B3 (74 aa).

A signal peptide spans 1 to 22; sequence MAFLKKSVFLVLFLGLVSLSIC. Positions 23 to 43 are excised as a propeptide; it reads EEEKREEENEEKQEDDEQSEE.

In terms of tissue distribution, expressed by the skin glands.

It is found in the secreted. Its function is as follows. Possesses a potent antimicrobial activity against Gram-positive and Gram-negative bacteria. Probably acts by disturbing membrane functions with its amphipathic structure. In Phyllomedusa bicolor (Two-colored leaf frog), this protein is Dermaseptin-B3.